The following is a 504-amino-acid chain: Aspartyl/glutamyl-tRNA(Asn/Gln) amidotransferase subunit B (504 aa).

Belongs to the GatB/GatE family. GatB subfamily. As to quaternary structure, heterotrimer of A, B and C subunits.

It catalyses the reaction L-glutamyl-tRNA(Gln) + L-glutamine + ATP + H2O = L-glutaminyl-tRNA(Gln) + L-glutamate + ADP + phosphate + H(+). The enzyme catalyses L-aspartyl-tRNA(Asn) + L-glutamine + ATP + H2O = L-asparaginyl-tRNA(Asn) + L-glutamate + ADP + phosphate + 2 H(+). Its function is as follows. Allows the formation of correctly charged Asn-tRNA(Asn) or Gln-tRNA(Gln) through the transamidation of misacylated Asp-tRNA(Asn) or Glu-tRNA(Gln) in organisms which lack either or both of asparaginyl-tRNA or glutaminyl-tRNA synthetases. The reaction takes place in the presence of glutamine and ATP through an activated phospho-Asp-tRNA(Asn) or phospho-Glu-tRNA(Gln). This Rhodococcus opacus (strain B4) protein is Aspartyl/glutamyl-tRNA(Asn/Gln) amidotransferase subunit B.